Here is a 3008-residue protein sequence, read N- to C-terminus: Genome polyprotein (3008 aa).

Position 2 is an N-acetylserine; by host (serine 2). Residues 2 to 23 (STNPKPQRKTKRNTNRRPMDVK) form an interaction with STAT1 region. The tract at residues 2 to 58 (STNPKPQRKTKRNTNRRPMDVKFPGGGQIVGGVYLLPRRGPRLGVRATRKTSERSQP) is interaction with EIF2AK2/PKR. Positions 2 to 59 (STNPKPQRKTKRNTNRRPMDVKFPGGGQIVGGVYLLPRRGPRLGVRATRKTSERSQPR) are interaction with DDX3X. Residues 2 to 75 (STNPKPQRKT…PKARRPEGRS (74 aa)) are disordered. Topologically, residues 2 to 168 (STNPKPQRKT…EDGINYATGN (167 aa)) are cytoplasmic. Short sequence motifs (nuclear localization signal) lie at residues 5–13 (PKPQRKTKR) and 38–43 (PRRGPR). A compositionally biased stretch (basic residues) spans 7-16 (PQRKTKRNTN). Low complexity predominate over residues 32–47 (GGVYLLPRRGPRLGVR). A Phosphoserine; by host modification is found at serine 53. Short sequence motifs (nuclear localization signal) lie at residues 58 to 64 (PRGRRQP) and 66 to 71 (PKARRP). A compositionally biased stretch (basic residues) spans 58–68 (PRGRRQPIPKA). Serine 99 and serine 116 each carry phosphoserine; by host. The tract at residues 112-152 (PRGRSRNLGKVIDTLTCGFADLMGYIPLVGAPVGSVARALA) is important for endoplasmic reticulum and mitochondrial localization. Positions 122–173 (VIDTLTCGFADLMGYIPLVGAPVGSVARALAHGVRALEDGINYATGNLPGCS) are interaction with APOA2. An important for lipid droplets localization region spans residues 164–167 (YATG). The chain crosses the membrane as a helical span at residues 169–189 (LPGCSFSIFLLALLSCLTVPA). Positions 178–191 (LLALLSCLTVPASA) are cleaved as a propeptide — ER anchor for the core protein, removed in mature form by host signal peptidase. The Lumenal segment spans residues 190-358 (SAVNYRNVSG…SGGHWGVLVG (169 aa)). Asparagine 196, asparagine 209, and asparagine 234 each carry an N-linked (GlcNAc...) asparagine; by host glycan. Positions 265–296 (MVGAATVCSGLYIGDLCGGLFLVGQMFSFRPR) are important for fusion. N-linked (GlcNAc...) asparagine; by host glycosylation occurs at asparagine 305. The helical transmembrane segment at 359–379 (VAYFSMQANWAKVILVLFLFA) threads the bilayer. At 380 to 725 (GVDAETHVSG…WEYVVLAFLL (346 aa)) the chain is on the lumenal side. The HVR1 stretch occupies residues 385–412 (THVSGAAVGRSTAGLANLFSSGSKQNLQ). 3 N-linked (GlcNAc...) (high mannose) asparagine; by host glycosylation sites follow: asparagine 417, asparagine 423, and asparagine 430. 4 disulfides stabilise this stretch: cysteine 429–cysteine 553, cysteine 452–cysteine 459, cysteine 487–cysteine 495, and cysteine 504–cysteine 509. A glycan (N-linked (GlcNAc...) asparagine; by host) is linked at asparagine 448. Residues 475-479 (ANISG) form an HVR2 region. Residue asparagine 476 is glycosylated (N-linked (GlcNAc...) asparagine; by host). Residues 481 to 494 (SDDRPYCWHYAPRP) form a CD81-binding 1 region. Residue asparagine 533 is glycosylated (N-linked (GlcNAc...) asparagine; by host). The CD81-binding 2 stretch occupies residues 545–552 (PPHGAWFG). A glycan (N-linked (GlcNAc...) asparagine; by host) is linked at asparagine 557. 4 disulfide bridges follow: cysteine 565–cysteine 570, cysteine 581–cysteine 585, cysteine 597–cysteine 620, and cysteine 607–cysteine 644. N-linked (GlcNAc...) (high mannose) asparagine; by host glycans are attached at residues asparagine 623 and asparagine 645. Cysteine 652 and cysteine 677 are joined by a disulfide. Residues 660–671 (VELSPLLLTTTA) are PKR/eIF2-alpha phosphorylation homology domain (PePHD). A helical transmembrane segment spans residues 726–746 (LADARVSAYLWMMFMVSQVEA). The Lumenal portion of the chain corresponds to 747–757 (ALSNLININAA). A helical membrane pass occupies residues 758–778 (SAAGAQGFWYAILFICIVWHV). Over 779–782 (KGRF) the chain is Cytoplasmic. A helical membrane pass occupies residues 783 to 803 (PAAAAYAACGLWPCFLLLLML). The Lumenal segment spans residues 804-813 (PERAYAYDQE). The chain crosses the membrane as a helical span at residues 814–834 (VAGSLGGAIVVMLTILTLSPH). Topologically, residues 835–881 (YKLWLARGLWWIQYFIARTEAVLHVYIPSFNVRGPRDSVIVLAVLVC) are cytoplasmic. A helical transmembrane segment spans residues 882 to 902 (PDLVFDITKYLLAILGPLHIL). The Lumenal portion of the chain corresponds to 903-928 (QASLLRIPYFVRAQALVKICSLLRGV). Residues 903-1026 (QASLLRIPYF…TETSKGWRLL (124 aa)) form the Peptidase C18 domain. Positions 904–1206 (ASLLRIPYFV…PVESLETTMR (303 aa)) are protease NS2-3. A lipid anchor (S-palmitoyl cysteine; by host) is attached at cysteine 922. A helical membrane pass occupies residues 929-949 (VYGKYFQMVVLKSRGLTGTYI). Residues 929–949 (VYGKYFQMVVLKSRGLTGTYI) form an interaction with host SCPS1 region. The Cytoplasmic segment spans residues 950 to 1657 (YDHLTPMSDW…CMSADLEVVT (708 aa)). Catalysis depends on for protease NS2 activity; shared with dimeric partner residues histidine 952, glutamate 972, and cysteine 993. In terms of domain architecture, Peptidase S29 spans 1027 to 1208 (APITAYAQQT…ESLETTMRSP (182 aa)). Active-site charge relay system; for serine protease NS3 activity residues include histidine 1083 and aspartate 1107. Zn(2+) contacts are provided by cysteine 1123 and cysteine 1125. Residue serine 1165 is the Charge relay system; for serine protease NS3 activity of the active site. 2 residues coordinate Zn(2+): cysteine 1171 and histidine 1175. The Helicase ATP-binding domain maps to 1217–1369 (PAVPQTYQVA…SNIEEVALPT (153 aa)). 1230–1237 (APTGSGKS) lines the ATP pocket. 2 residues coordinate Mg(2+): serine 1237 and glutamate 1317. Residues 1316–1319 (DECY) carry the DECH box motif. The RNA-binding stretch occupies residues 1486 to 1498 (QRRGRTGRGRLGT). A helical membrane pass occupies residues 1658 to 1678 (STWVLVGGVLAALAAYCLSVG). Residues 1679 to 1690 (SVVIVGRVVLSG) are NS3-binding. Residues 1679-1805 (SVVIVGRVVL…AVTSPLTTQQ (127 aa)) are Cytoplasmic-facing. A helical membrane pass occupies residues 1806 to 1826 (TLLFNILGGWVASQIRDSDAS). Over 1827–1828 (TA) the chain is Lumenal. A helical transmembrane segment spans residues 1829–1849 (FVVSGLAGAAVGSVGLGKILV). Residue aspartate 1850 is a topological domain, cytoplasmic. Residues 1851–1871 (ILPGYGAGVRGAVVTFKIMSG) form a helical membrane-spanning segment. The Lumenal segment spans residues 1872–1881 (EMPSTEDLVN). A helical membrane pass occupies residues 1882 to 1902 (LLPAILSPGALVVEVVCPAIL). The Cytoplasmic segment spans residues 1903-1972 (RRHVGPGEGA…WINEDCSTPC (70 aa)). The S-palmitoyl cysteine; by host moiety is linked to residue cysteine 1972. Residues 1973–2002 (AESWLWEVWDWVLHVLSDFKTCLKAKFVPL) lie within the membrane without spanning it. The Cytoplasmic segment spans residues 2003–2987 (MPGIPLLSWP…YHSMSHARPR (985 aa)). 3 residues coordinate Zn(2+): cysteine 2029, cysteine 2031, and cysteine 2052. Residues 2120–2208 (ELFTEVDGIR…ASSSASQLSP (89 aa)) form an FKBP8-binding region. The transcriptional activation stretch occupies residues 2120 to 2329 (ELFTEVDGIR…PVPSPRRKRT (210 aa)). The segment at 2135–2139 (PKCKP) is interaction with non-structural protein 4A. The interaction with host SKP2 stretch occupies residues 2189–2435 (RLARGSRPSL…ALVTPCAAEE (247 aa)). 5 positions are modified to phosphoserine; by host: serine 2194, serine 2197, serine 2201, serine 2204, and serine 2207. Residues 2210 to 2245 (LLQATCTAPHDSPGTDLLEANLLWGSTATRVETDEK) are ISDR. The segment at 2210-2272 (LLQATCTAPH…REVSVAAEIL (63 aa)) is interaction with EIF2AK2/PKR. The tract at residues 2245–2303 (KVIILDSFESCVAEQNDDREVSVAAEILRPTKKFPPALPIWARPDYNPPLTETWKQQDY) is NS4B-binding. The tract at residues 2296–2373 (ETWKQQDYQA…TPTETTDSGP (78 aa)) is V3. Positions 2319-2322 (PPVP) match the SH3-binding motif. Positions 2324–2332 (PRRKRTVQL) match the Nuclear localization signal motif. Positions 2346-2406 (AKTFGQSEPS…DPDLTSDSWS (61 aa)) are disordered. A Glycyl lysine isopeptide (Lys-Gly) (interchain with G-Cter in ubiquitin) cross-link involves residue lysine 2347. Serine 2446 carries the post-translational modification Phosphoserine; by host. The RdRp catalytic domain maps to 2631–2749 (PMGFSYDTRC…IAESDGVEED (119 aa)). Residues aspartate 2637, aspartate 2735, and aspartate 2736 each coordinate Mg(2+). A helical membrane pass occupies residues 2988 to 3008 (YLLLCLLILTVGVGIFLLPAR).

The protein belongs to the hepacivirus polyprotein family. In terms of assembly, homooligomer. Interacts with E1 (via C-terminus). Interacts with the non-structural protein 5A. Interacts (via N-terminus) with host STAT1 (via SH2 domain); this interaction results in decreased STAT1 phosphorylation and ubiquitin-mediated proteasome-dependent STAT1 degradation, leading to decreased IFN-stimulated gene transcription. Interacts with host STAT3; this interaction constitutively activates STAT3. Interacts with host LTBR receptor. Interacts with host TNFRSF1A receptor and possibly induces apoptosis. Interacts with host HNRPK. Interacts with host YWHAE. Interacts with host UBE3A/E6AP. Interacts with host DDX3X. Interacts with host APOA2. Interacts with host RXRA protein. Interacts with host SP110 isoform 3/Sp110b; this interaction sequesters the transcriptional corepressor SP110 away from the nucleus. Interacts with host CREB3 nuclear transcription protein; this interaction triggers cell transformation. Interacts with host ACY3. Interacts with host C1QR1. Interacts with host RBM24; this interaction, which enhances the interaction of the mature core protein with 5'-UTR, may inhibit viral translation and favor replication. Interacts with host EIF2AK2/PKR; this interaction induces the autophosphorylation of EIF2AK2. Part of the viral assembly initiation complex composed of NS2, E1, E2, NS3, NS4A, NS5A and the mature core protein. Forms a heterodimer with envelope glycoprotein E2. Interacts with mature core protein. Interacts with protease NS2. The heterodimer E1/E2 interacts with host CLDN1; this interaction plays a role in viral entry into host cell. Interacts with host SPSB2 (via C-terminus). Part of the viral assembly initiation complex composed of NS2, E1, E2, NS3, NS4A, NS5A and the mature core protein. Interacts with host NEURL3; this interaction prevents E1 binding to glycoprotein E2. As to quaternary structure, forms a heterodimer with envelope glycoprotein E1. Interacts with host CD81 and SCARB1 receptors; these interactions play a role in viral entry into host cell. Interacts with host EIF2AK2/PKR; this interaction inhibits EIF2AK2 and probably allows the virus to evade the innate immune response. Interacts with host CD209/DC-SIGN and CLEC4M/DC-SIGNR. Interact with host SPCS1; this interaction is essential for viral particle assembly. Interacts with protease NS2. The heterodimer E1/E2 interacts with host CLDN1; this interaction plays a role in viral entry into host cell. Part of the viral assembly initiation complex composed of NS2, E1, E2, NS3, NS4A, NS5A and the mature core protein. Interacts with host SLC3A2/4F2hc; the interaction may facilitate viral entry into host cell. Interacts with human PLSCR1. In terms of assembly, homohexamer. Homoheptamer. Interacts with protease NS2. Homodimer. Interacts with host SPCS1; this interaction is essential for viral particle assembly. Interacts with envelope glycoprotein E1. Interacts with envelope glycoprotein E2. Interacts with viroporin p7. Interacts with serine protease/helicase NS3. Part of the replication complex composed of NS2, NS3, NS4A, NS4B, NS5A and the RNA-directed RNA polymerase embedded in an ER-derived membranous web. Part of the viral assembly initiation complex composed of NS2, E1, E2, NS3, NS4A, NS5A and the mature core protein. As to quaternary structure, interacts with protease NS2. Interacts with non-structural protein 4A; this interaction stabilizes the folding of NS3 serine protease. NS3-NS4A interaction is essential for NS3 activation and allows membrane anchorage of the latter. NS3/NS4A complex also prevents phosphorylation of host IRF3, thus preventing the establishment of dsRNA induced antiviral state. Interacts with host MAVS; this interaction leads to the cleavage and inhibition of host MAVS. Interacts with host TICAM1; this interaction leads to the cleavage and inhibition of host TICAM1. Interacts with host TANK-binding kinase/TBK1; this interaction results in the inhibition of the association between TBK1 and IRF3, which leads to the inhibition of IRF3 activation. Interacts with host RBM24. Part of the replication complex composed of NS2, NS3, NS4A, NS4B, NS5A and the RNA-directed RNA polymerase embedded in an ER-derived membranous web. Part of the viral assembly initiation complex composed of NS2, E1, E2, NS3, NS4A, NS5A and the mature core protein. In terms of assembly, interacts with NS3 serine protease; this interaction stabilizes the folding of NS3 serine protease. NS3-NS4A interaction is essential for NS3 activation and allows membrane anchorage of the latter. Interacts with non-structural protein 5A (via N-terminus). Part of the replication complex composed of NS2, NS3, NS4A, NS4B, NS5A and the RNA-directed RNA polymerase embedded in an ER-derived membranous web. Part of the viral assembly initiation complex composed of NS2, E1, E2, NS3, NS4A, NS5A and the mature core protein. Homomultimer. Interacts with non-structural protein NS5A. Interacts with host PLA2G4C; this interaction likely initiates the recruitment of replication complexes to lipid droplets. Interacts with host STING; this interaction disrupts the interaction between STING and TBK1 thereby suppressing the interferon signaling. Part of the replication complex composed of NS2, NS3, NS4A, NS4B, NS5A and the RNA-directed RNA polymerase embedded in an ER-derived membranous web. As to quaternary structure, monomer. Homodimer; dimerization is required for RNA-binding. Interacts with the mature core protein. Interacts (via N-terminus) with non-structural protein 4A. Interacts with non-structural protein 4B. Interacts (via region D2) with RNA-directed RNA polymerase. Part of the viral assembly initiation complex composed of NS2, E1, E2, NS3, NS4A, NS5A and the mature core protein. Part of the replication complex composed of NS2, NS3, NS4A, NS4B, NS5A and the RNA-directed RNA polymerase embedded in an ER-derived membranous web. Interacts with host GRB2. Interacts with host BIN1. Interacts with host PIK3R1. Interacts with host SRCAP. Interacts with host FKBP8. Interacts (via C-terminus) with host VAPB (via MSP domain). Interacts with host EIF2AK2/PKR; this interaction leads to disruption of EIF2AK2 dimerization by NS5A and probably allows the virus to evade the innate immune response. Interacts (via N-terminus) with host PACSIN2 (via N-terminus); this interaction attenuates protein kinase C alpha-mediated phosphorylation of PACSIN2 by disrupting the interaction between PACSIN2 and PRKCA. Interacts (via N-terminus) with host SRC kinase (via SH2 domain). Interacts with most Src-family kinases. Interacts with host IFI27 and SKP2; promotes the ubiquitin-mediated proteasomal degradation of NS5A. Interacts with host GPS2. Interacts with host TNFRSF21; this interaction allows the modulation by the virus of JNK, p38 MAPK, STAT3, and Akt signaling pathways in a DR6-dependent manner. Interacts (via N-terminus) with host CIDEB (via N-terminus); this interaction seems to regulate the association of HCV particles with APOE. Interacts with host CHKA/Choline Kinase-alpha; CHKA bridges host PI4KA and NS5A and potentiates NS5A-stimulated PI4KA activity, which then facilitates the targeting of the ternary complex to the ER for viral replication. Interacts with host SPSB2 (via C-terminus); this interaction targets NS5A for ubiquitination and degradation. Interacts with host RAB18; this interaction may promote the association of NS5A and other replicase components with lipid droplets. Interacts (via region D2) with host PPIA/CYPA; the interaction stimulates RNA-binding ability of NS5A and is dependent on the peptidyl-prolyl cis-trans isomerase activity of PPIA/CYPA. Interacts with host TRIM14; this interaction induces the degradation of NS5A. In terms of assembly, homooligomer. Interacts with non-structural protein 5A. Interacts with host VAPB. Interacts with host PRK2/PKN2. Interacts with host HNRNPA1 and SEPT6; these interactions facilitate viral replication. Part of the replication complex composed of NS2, NS3, NS4A, NS4B, NS5A and the RNA-directed RNA polymerase. Zn(2+) serves as cofactor. Requires Mg(2+) as cofactor. Post-translationally, specific enzymatic cleavages in vivo yield mature proteins. The structural proteins, core, E1, E2 and p7 are produced by proteolytic processing by host signal peptidases. The core protein precursor is synthesized as a 23 kDa, which is retained in the ER membrane through the hydrophobic signal peptide. Cleavage by the signal peptidase releases the 21 kDa mature core protein. The cleavage of the core protein precursor occurs between aminoacids 176 and 188 but the exact cleavage site is not known. Some degraded forms of the core protein appear as well during the course of infection. The other proteins (p7, NS2, NS3, NS4A, NS4B, NS5A and NS5B) are cleaved by the viral proteases. Autoprocessing between NS2 and NS3 is mediated by the NS2 cysteine protease catalytic domain and regulated by the NS3 N-terminal domain. Phosphorylated by host PKC and PKA. In terms of processing, ubiquitinated; mediated by UBE3A and leading to core protein subsequent proteasomal degradation. Post-translationally, highly N-glycosylated. Palmitoylation is required for NS2/3 autoprocessing and E2 recruitment to membranes. In terms of processing, palmitoylated. This modification may play a role in its polymerization or in protein-protein interactions. Post-translationally, phosphorylated on serines in a basal form termed p56. p58 is a hyperphosphorylated form of p56. p56 and p58 coexist in the cell in roughly equivalent amounts. Hyperphosphorylation is dependent on the presence of NS4A. Host CSNK1A1/CKI-alpha or RPS6KB1 kinases may be responsible for NS5A phosphorylation. Tyrosine phosphorylation is essential for the interaction with host SRC. In terms of processing, the N-terminus is phosphorylated by host PRK2/PKN2.

The protein resides in the host endoplasmic reticulum membrane. The protein localises to the host mitochondrion membrane. Its subcellular location is the virion. It localises to the host cytoplasm. It is found in the host nucleus. The protein resides in the host lipid droplet. The protein localises to the virion membrane. Its subcellular location is the host mitochondrion. It localises to the host cell membrane. It is found in the host perinuclear region. It carries out the reaction Hydrolysis of four peptide bonds in the viral precursor polyprotein, commonly with Asp or Glu in the P6 position, Cys or Thr in P1 and Ser or Ala in P1'.. It catalyses the reaction a ribonucleoside 5'-triphosphate + H2O = a ribonucleoside 5'-diphosphate + phosphate + H(+). The catalysed reaction is ATP + H2O = ADP + phosphate + H(+). The enzyme catalyses RNA(n) + a ribonucleoside 5'-triphosphate = RNA(n+1) + diphosphate. With respect to regulation, inhibited by the antiviral drug hexamethylene amiloride. Inhibition by amantadine appears to be genotype-dependent. Also inhibited by long-alkyl-chain iminosugar derivatives. Activity is up-regulated by PRK2/PKN2-mediated phosphorylation. In terms of biological role, packages viral RNA to form a viral nucleocapsid, and promotes virion budding. Participates in the viral particle production as a result of its interaction with the non-structural protein 5A. Binds RNA and may function as a RNA chaperone to induce the RNA structural rearrangements taking place during virus replication. Modulates viral translation initiation by interacting with viral IRES and 40S ribosomal subunit. Affects various cell signaling pathways, host immunity and lipid metabolism. Prevents the establishment of cellular antiviral state by blocking the interferon-alpha/beta (IFN-alpha/beta) and IFN-gamma signaling pathways and by blocking the formation of phosphorylated STAT1 and promoting ubiquitin-mediated proteasome-dependent degradation of STAT1. Activates STAT3 leading to cellular transformation. Regulates the activity of cellular genes, including c-myc and c-fos. May repress the promoter of p53, and sequester CREB3 and SP110 isoform 3/Sp110b in the cytoplasm. Represses cell cycle negative regulating factor CDKN1A, thereby interrupting an important check point of normal cell cycle regulation. Targets transcription factors involved in the regulation of inflammatory responses and in the immune response: suppresses TNF-induced NF-kappa-B activation, and activates AP-1. Binds to dendritic cells (DCs) via C1QR1, resulting in down-regulation of T-lymphocytes proliferation. Alters lipid metabolism by interacting with hepatocellular proteins involved in lipid accumulation and storage. Induces up-regulation of FAS promoter activity, and thereby contributes to the increased triglyceride accumulation in hepatocytes (steatosis). Functionally, forms a heterodimer with envelope glycoprotein E2, which mediates virus attachment to the host cell, virion internalization through clathrin-dependent endocytosis and fusion with host membrane. Fusion with the host cell is most likely mediated by both E1 and E2, through conformational rearrangements of the heterodimer required for fusion rather than a classical class II fusion mechanism. E1/E2 heterodimer binds host apolipoproteins such as APOB and ApoE thereby forming a lipo-viro-particle (LVP). APOE associated to the LVP allows the initial virus attachment to cell surface receptors such as the heparan sulfate proteoglycans (HSPGs), syndecan-1 (SDC1), syndecan-1 (SDC2), the low-density lipoprotein receptor (LDLR) and scavenger receptor class B type I (SCARB1). The cholesterol transfer activity of SCARB1 allows E2 exposure and binding of E2 to SCARB1 and the tetraspanin CD81. E1/E2 heterodimer binding on CD81 activates the epithelial growth factor receptor (EGFR) signaling pathway. Diffusion of the complex E1-E2-EGFR-SCARB1-CD81 to the cell lateral membrane allows further interaction with Claudin 1 (CLDN1) and occludin (OCLN) to finally trigger HCV entry. Its function is as follows. Forms a heterodimer with envelope glycoprotein E1, which mediates virus attachment to the host cell, virion internalization through clathrin-dependent endocytosis and fusion with host membrane. Fusion with the host cell is most likely mediated by both E1 and E2, through conformational rearrangements of the heterodimer required for fusion rather than a classical class II fusion mechanism. The interaction between envelope glycoprotein E2 and host apolipoprotein E/APOE allows the proper assembly, maturation and infectivity of the viral particles. This interaction is probably promoted via the up-regulation of cellular autophagy by the virus. E1/E2 heterodimer binds host apolipoproteins such as APOB and APOE thereby forming a lipo-viro-particle (LVP). APOE associated to the LVP allows the initial virus attachment to cell surface receptors such as the heparan sulfate proteoglycans (HSPGs), syndecan-1 (SDC1), syndecan-1 (SDC2), the low-density lipoprotein receptor (LDLR) and scavenger receptor class B type I (SCARB1). The cholesterol transfer activity of SCARB1 allows E2 exposure and binding of E2 to SCARB1 and the tetraspanin CD81. E1/E2 heterodimer binding on CD81 activates the epithelial growth factor receptor (EGFR) signaling pathway. Diffusion of the complex E1-E2-EGFR-SCARB1-CD81 to the cell lateral membrane allows further interaction with Claudin 1 (CLDN1) and occludin (OCLN) to finally trigger HCV entry. Inhibits host EIF2AK2/PKR activation, preventing the establishment of an antiviral state. Viral ligand for CD209/DC-SIGN and CLEC4M/DC-SIGNR, which are respectively found on dendritic cells (DCs), and on liver sinusoidal endothelial cells and macrophage-like cells of lymph node sinuses. These interactions allow the capture of circulating HCV particles by these cells and subsequent facilitated transmission to permissive cells such as hepatocytes and lymphocyte subpopulations. The interaction between E2 and host amino acid transporter complex formed by SLC3A2 and SLC7A5/LAT1 may facilitate viral entry into host cell. Ion channel protein that acts as a viroporin and plays an essential role in the assembly, envelopment and secretion of viral particles. Regulates the host cell secretory pathway, which induces the intracellular retention of viral glycoproteins and favors assembly of viral particles. Creates a pore in acidic organelles and releases Ca(2+) and H(+) in the cytoplasm of infected cells, leading to a productive viral infection. High levels of cytoplasmic Ca(2+) may trigger membrane trafficking and transport of viral ER-associated proteins to viroplasms, sites of viral genome replication. This ionic imbalance induces the assembly of the inflammasome complex, which triggers the maturation of pro-IL-1beta into IL-1beta through the action of caspase-1. Targets also host mitochondria and induces mitochondrial depolarization. In addition of its role as a viroporin, acts as a lipid raft adhesion factor. In terms of biological role, cysteine protease required for the proteolytic auto-cleavage between the non-structural proteins NS2 and NS3. The N-terminus of NS3 is required for the function of NS2 protease (active region NS2-3). Promotes the initiation of viral particle assembly by mediating the interaction between structural and non-structural proteins. Functionally, displays three enzymatic activities: serine protease with a chymotrypsin-like fold, NTPase and RNA helicase. NS3 serine protease, in association with NS4A, is responsible for the cleavages of NS3-NS4A, NS4A-NS4B, NS4B-NS5A and NS5A-NS5B. The NS3/NS4A complex prevents phosphorylation of host IRF3, thus preventing the establishment of dsRNA induced antiviral state. The NS3/NS4A complex induces host amino acid transporter component SLC3A2, thus contributing to HCV propagation. NS3 RNA helicase binds to RNA and unwinds both dsDNA and dsRNA in the 3' to 5' direction, and likely resolves RNA complicated stable secondary structures in the template strand. Binds a single ATP and catalyzes the unzipping of a single base pair of dsRNA. Inhibits host antiviral proteins TBK1 and IRF3 thereby preventing the establishment of an antiviral state. Cleaves host MAVS/CARDIF thereby preventing the establishment of an antiviral state. Cleaves host TICAM1/TRIF, thereby disrupting TLR3 signaling and preventing the establishment of an antiviral state. Its function is as follows. Induces a specific membrane alteration that serves as a scaffold for the virus replication complex. This membrane alteration gives rise to the so-called ER-derived membranous web that contains the replication complex. NS4B self-interaction contributes to its function in membranous web formation. Promotes host TRIF protein degradation in a CASP8-dependent manner thereby inhibiting host TLR3-mediated interferon signaling. Disrupts the interaction between STING and TBK1 contributing to the inhibition of interferon signaling. Phosphorylated protein that is indispensable for viral replication and assembly. Both hypo- and hyperphosphorylated states are required for the viral life cycle. The hyperphosphorylated form of NS5A is an inhibitor of viral replication. Involved in RNA-binding and especially in binding to the viral genome. Zinc is essential for RNA-binding. Participates in the viral particle production as a result of its interaction with the mature viral core protein. Its interaction with host VAPB may target the viral replication complex to vesicles. Down-regulates viral IRES translation initiation. Mediates interferon resistance, presumably by interacting with and inhibiting host EIF2AK2/PKR. Prevents BIN1-induced apoptosis. Acts as a transcriptional activator of some host genes important for viral replication when localized in the nucleus. Via the interaction with host PACSIN2, modulates lipid droplet formation in order to promote virion assembly. Modulates TNFRSF21/DR6 signaling pathway for viral propagation. In terms of biological role, RNA-dependent RNA polymerase that performs primer-template recognition and RNA synthesis during viral replication. Initiates RNA transcription/replication at a flavin adenine dinucleotide (FAD), resulting in a 5'- FAD cap on viral RNAs. In this way, recognition of viral 5' RNA by host pattern recognition receptors can be bypassed, thereby evading activation of antiviral pathways. The protein is Genome polyprotein of Homo sapiens (Human).